The sequence spans 452 residues: UDP-N-acetylmuramoylalanine--D-glutamate ligase (452 aa).

119–125 (GSNGKTT) is a binding site for ATP.

It belongs to the MurCDEF family.

It localises to the cytoplasm. It catalyses the reaction UDP-N-acetyl-alpha-D-muramoyl-L-alanine + D-glutamate + ATP = UDP-N-acetyl-alpha-D-muramoyl-L-alanyl-D-glutamate + ADP + phosphate + H(+). Its pathway is cell wall biogenesis; peptidoglycan biosynthesis. Its function is as follows. Cell wall formation. Catalyzes the addition of glutamate to the nucleotide precursor UDP-N-acetylmuramoyl-L-alanine (UMA). The sequence is that of UDP-N-acetylmuramoylalanine--D-glutamate ligase from Streptococcus equi subsp. zooepidemicus (strain MGCS10565).